Consider the following 207-residue polypeptide: Large ribosomal subunit protein uL4 (207 aa).

The disordered stretch occupies residues 53–76; sequence TVSEVSGTTKKPFKQKGTGNARQG.

This sequence belongs to the universal ribosomal protein uL4 family. As to quaternary structure, part of the 50S ribosomal subunit.

Functionally, one of the primary rRNA binding proteins, this protein initially binds near the 5'-end of the 23S rRNA. It is important during the early stages of 50S assembly. It makes multiple contacts with different domains of the 23S rRNA in the assembled 50S subunit and ribosome. In terms of biological role, forms part of the polypeptide exit tunnel. This Rickettsia bellii (strain OSU 85-389) protein is Large ribosomal subunit protein uL4.